Consider the following 209-residue polypeptide: Uracil phosphoribosyltransferase (209 aa).

5-phospho-alpha-D-ribose 1-diphosphate-binding positions include Arg79, Arg104, and 131-139 (DPMLATGGS). Uracil is bound by residues Ile194 and 199-201 (GDA). Asp200 serves as a coordination point for 5-phospho-alpha-D-ribose 1-diphosphate.

The protein belongs to the UPRTase family. The cofactor is Mg(2+).

The enzyme catalyses UMP + diphosphate = 5-phospho-alpha-D-ribose 1-diphosphate + uracil. Its pathway is pyrimidine metabolism; UMP biosynthesis via salvage pathway; UMP from uracil: step 1/1. Its activity is regulated as follows. Allosterically activated by GTP. Catalyzes the conversion of uracil and 5-phospho-alpha-D-ribose 1-diphosphate (PRPP) to UMP and diphosphate. The polypeptide is Uracil phosphoribosyltransferase (Oceanobacillus iheyensis (strain DSM 14371 / CIP 107618 / JCM 11309 / KCTC 3954 / HTE831)).